The following is a 66-amino-acid chain: MSGNKSPFPDGRIPDRLPDGRPAVPWRSRWTEGVLPLWLVATAGGMAVLFVVGLFFYGSYTGVGSA.

A disordered region spans residues 1 to 23; the sequence is MSGNKSPFPDGRIPDRLPDGRPA. Residues 37-57 traverse the membrane as a helical segment; sequence LWLVATAGGMAVLFVVGLFFY.

Belongs to the PsbJ family. PSII is composed of 1 copy each of membrane proteins PsbA, PsbB, PsbC, PsbD, PsbE, PsbF, PsbH, PsbI, PsbJ, PsbK, PsbL, PsbM, PsbT, PsbX, PsbY, PsbZ, Psb30/Ycf12, peripheral proteins PsbO, CyanoQ (PsbQ), PsbU, PsbV and a large number of cofactors. It forms dimeric complexes.

Its subcellular location is the cellular thylakoid membrane. In terms of biological role, one of the components of the core complex of photosystem II (PSII). PSII is a light-driven water:plastoquinone oxidoreductase that uses light energy to abstract electrons from H(2)O, generating O(2) and a proton gradient subsequently used for ATP formation. It consists of a core antenna complex that captures photons, and an electron transfer chain that converts photonic excitation into a charge separation. This chain is Photosystem II reaction center protein J, found in Parasynechococcus marenigrum (strain WH8102).